We begin with the raw amino-acid sequence, 286 residues long: Pyridoxal kinase PdxY (286 aa).

Residues Ser9 and 44–45 (TQ) each bind substrate. ATP is bound by residues Asp111, Glu148, and Lys181. Residue Asp222 coordinates substrate.

The protein belongs to the pyridoxine kinase family. PdxY subfamily. Homodimer. Requires Mg(2+) as cofactor.

The catalysed reaction is pyridoxal + ATP = pyridoxal 5'-phosphate + ADP + H(+). Its pathway is cofactor metabolism; pyridoxal 5'-phosphate salvage; pyridoxal 5'-phosphate from pyridoxal: step 1/1. Pyridoxal kinase involved in the salvage pathway of pyridoxal 5'-phosphate (PLP). Catalyzes the phosphorylation of pyridoxal to PLP. The protein is Pyridoxal kinase PdxY of Pasteurella multocida (strain Pm70).